The chain runs to 217 residues: Biotin transport regulator (217 aa).

The tract at residues 14-49 (GDGLGNLAGRSADPTGAADKGESGVPVPPTGFVDPT) is disordered.

Functionally, may be part of a system that R.meliloti uses to respond to plant (alfalfa) biotin signals. The polypeptide is Biotin transport regulator (bioS) (Rhizobium meliloti (strain 1021) (Ensifer meliloti)).